Consider the following 252-residue polypeptide: MKTVTVKDLVIGTGAPKIIVSLMAKDIARVKSEALAYREADFDILEWRVDHFADLSNVESVMAAAKILRETMPEKPLLFTFRSAKEGGEQAISTEAYIALNRAAIDSGLVDMIDLELFTGDDQVKETVAYAHAHDVKVVMSNHDFHKTPEAEEIIARLRKMQSFDADIPKIALMPQSTNDVLTLLAATLEMQEQYADRPIITMSMAKTGVISRLAGEVFGSAATFGAVKKASAPGQISVNDLRTVLTILHQA.

3-dehydroquinate-binding positions include serine 21, 46-48, and arginine 82; that span reads EWR. Catalysis depends on histidine 143, which acts as the Proton donor/acceptor. Catalysis depends on lysine 170, which acts as the Schiff-base intermediate with substrate. The 3-dehydroquinate site is built by arginine 213, serine 232, and glutamine 236.

It belongs to the type-I 3-dehydroquinase family. In terms of assembly, homodimer.

The catalysed reaction is 3-dehydroquinate = 3-dehydroshikimate + H2O. Its pathway is metabolic intermediate biosynthesis; chorismate biosynthesis; chorismate from D-erythrose 4-phosphate and phosphoenolpyruvate: step 3/7. In terms of biological role, involved in the third step of the chorismate pathway, which leads to the biosynthesis of aromatic amino acids. Catalyzes the cis-dehydration of 3-dehydroquinate (DHQ) and introduces the first double bond of the aromatic ring to yield 3-dehydroshikimate. The protein is 3-dehydroquinate dehydratase of Escherichia coli (strain 55989 / EAEC).